Reading from the N-terminus, the 198-residue chain is Probable minor pilin MMP0709 (198 aa).

Residues 1-5 (MSNRG) constitute a propeptide that is removed on maturation. A QXSXEXXXL motif is present at residues 6-14 (QLSIEMVIL).

In terms of processing, the N-terminus is probably cleaved by the prepilin peptidase EppA, which recognizes the class III signal sequence.

It localises to the secreted. The protein resides in the cell surface. Its subcellular location is the fimbrium. The chain is Probable minor pilin MMP0709 from Methanococcus maripaludis (strain DSM 14266 / JCM 13030 / NBRC 101832 / S2 / LL).